Reading from the N-terminus, the 246-residue chain is Flavin-dependent thymidylate synthase (246 aa).

Residues 17–241 (VTVELVKHSA…PLTYAAFNTN (225 aa)) form the ThyX domain. FAD is bound by residues Ser69, 92–94 (RHR), and Glu101. DUMP is bound by residues 89–92 (EFMR), 101–105 (EESGR), and Arg173. The ThyX motif signature appears at 92-103 (RHRVGWSYNEES). FAD-binding positions include 189-191 (NAR) and His195. Arg200 contacts dUMP. Arg200 serves as the catalytic Involved in ionization of N3 of dUMP, leading to its activation.

It belongs to the thymidylate synthase ThyX family. Homotetramer. FAD serves as cofactor.

The catalysed reaction is dUMP + (6R)-5,10-methylene-5,6,7,8-tetrahydrofolate + NADPH + H(+) = dTMP + (6S)-5,6,7,8-tetrahydrofolate + NADP(+). It functions in the pathway pyrimidine metabolism; dTTP biosynthesis. Its function is as follows. Catalyzes the reductive methylation of 2'-deoxyuridine-5'-monophosphate (dUMP) to 2'-deoxythymidine-5'-monophosphate (dTMP) while utilizing 5,10-methylenetetrahydrofolate (mTHF) as the methyl donor, and NADPH and FADH(2) as the reductant. This Streptomyces avermitilis (strain ATCC 31267 / DSM 46492 / JCM 5070 / NBRC 14893 / NCIMB 12804 / NRRL 8165 / MA-4680) protein is Flavin-dependent thymidylate synthase.